Here is a 206-residue protein sequence, read N- to C-terminus: MRLFVGLGNPGAKYQGNRHNIGFMVIDEIARRHGFSPWRRRFQGETADGVLDGERITLLKPLTYMNESGRAVQDAASFYKIGQNEIAVFHDEIELPPAKVRVKVGGGIAGHNGLRSISAHIGNDYLRVRLGVGHPGAKELVHNHVLGDFAKSERPWVEALCEIAADNAGLIAKGKDASFANKVHLAMQAKGFYDNDKQAKGGERDK.

Tyr-14 is a tRNA binding site. His-19 serves as the catalytic Proton acceptor. TRNA-binding residues include Tyr-64, Asn-66, and Asn-112.

Belongs to the PTH family. In terms of assembly, monomer.

Its subcellular location is the cytoplasm. The enzyme catalyses an N-acyl-L-alpha-aminoacyl-tRNA + H2O = an N-acyl-L-amino acid + a tRNA + H(+). Hydrolyzes ribosome-free peptidyl-tRNAs (with 1 or more amino acids incorporated), which drop off the ribosome during protein synthesis, or as a result of ribosome stalling. In terms of biological role, catalyzes the release of premature peptidyl moieties from peptidyl-tRNA molecules trapped in stalled 50S ribosomal subunits, and thus maintains levels of free tRNAs and 50S ribosomes. The polypeptide is Peptidyl-tRNA hydrolase (Rhodopseudomonas palustris (strain ATCC BAA-98 / CGA009)).